The following is a 301-amino-acid chain: uncharacterized protein (301 aa).

Active-site charge relay system residues include S44 and Y107. Y133 serves as the catalytic Proton donor. The active-site Schiff-base intermediate with substrate is K162.

The protein belongs to the DapA family. As to quaternary structure, homotetramer.

The protein localises to the cytoplasm. This is an uncharacterized protein from Pyrobaculum arsenaticum (strain DSM 13514 / JCM 11321 / PZ6).